Consider the following 1357-residue polypeptide: MAYSYTEKKRIRKDFSKLPDVMDVPYLLAIQLDSYREFLQQGVSKEQFRDIGLHAAFKSVFPIISYSGNAALEYVGYRLGEPAFDVKECVLRGVTFAVPLRVKVRLIIFDKESSNKAIKDIKEQEVYMGEIPLMTENGTFVINGTERVIVSQLHRSPGVFFDHDRGKTHSSGKLLYSARIIPYRGSWLDFEFDPKDAVFVRIDRRRKLPASVLLRALGYSTEEVLDAFYDTNVFHVKNESLSLELVPQRLRGEVAVLDIKDASGKVIVEQGRRITARHINQLDKAGIKELEVPLDYVIGRTTAKAIVHPATGEIIAECNTELTADLLAKMAKANVVRFETLYTNDIDCGPFISDTLKIDSTTNQLEALVEIYRMMRPGEPPTKDAAETLFNNLFFSAERYDLSAVGRMKFNRRIGRTEIEGSGVLSKEDIVAVLKTLVDIRNGKGIVDDIDHLGNRRVRCVGEMAENQFRVGLVRVERAVKERLSMAESEGLMPQDLINAKPVAAAVKEFFGSSQLSQFMDQNNPLSEITHKRRVSALGPGGLTRERAGFEVRDVHPTHYGRVCPIETPEGPNIGLINSLAAYARTNQYGFLESPYRVVKEGKVTDEIVFLSAIEEADHVIAQASATLNDKGELVDELVAVRHLNEFTVKAPEDVTLMDVSPKQVVSVAASLIPFLEHDDANRALMGSNMQRQAVPTLRADKPLVGTGMERNVARDSGVCVVARRGGVIDSVDASRIVVRVNDDEVETGEAGVDIYNLTKYTRSNQNTCINQRPLVSKGDQVARGDIMADGPSTDMGELALGQNMRVAFMPWNGFNFEDSICLSERVVQEDRFTTIHIQELTCVARDTKLGPEEISSDIPNVGEAALNKLDEAGIVYVGAEVGPGDILVGKVTPKGETQLTPEEKLLRAIFGEKASDVKDTSLRVPTGTKGTVIDVQVFTRDGVERDSRALAIEKQQLDEIRKDLNEEFRIVEGATFERLRSALVGAIAEGGAGLKKGTAITDEFLDGLERGQWFKLRMADDALNEQLEKAQAYISDRRQMLDDKFEDKKRKLQQGDDLAPGVLKIVKVYLAIRRRIQPGDKMAGRHGNKGVVSVIMPVEDMPHDANGTPVDIVLNPLGVPSRMNVGQILETHLGLAAKGLGEKINRMLEEQRKVAELRKFLAEIYNEIGGRQENLDEFSDNEILELAKNLKGGVPMATAVFDGAKETEIKAMLKLADLPESGQMRLFDGRTGNQFERPTTVGYMYMLKLNHLVDDKMHARSTGSYSLVTQQPLGGKAQFGGQRFGEMEVWALEAYGAAYTLQEMLTVKSDDVNGRTKMYKNIVDGDHRMEPGMPESFNVLIKEIRSLGIDIDLETE.

Belongs to the RNA polymerase beta chain family. The RNAP catalytic core consists of 2 alpha, 1 beta, 1 beta' and 1 omega subunit. When a sigma factor is associated with the core the holoenzyme is formed, which can initiate transcription.

It carries out the reaction RNA(n) + a ribonucleoside 5'-triphosphate = RNA(n+1) + diphosphate. Functionally, DNA-dependent RNA polymerase catalyzes the transcription of DNA into RNA using the four ribonucleoside triphosphates as substrates. This Ectopseudomonas mendocina (strain ymp) (Pseudomonas mendocina) protein is DNA-directed RNA polymerase subunit beta.